The following is a 218-amino-acid chain: Large ribosomal subunit protein uL3 (218 aa).

At Q153 the chain carries N5-methylglutamine.

This sequence belongs to the universal ribosomal protein uL3 family. As to quaternary structure, part of the 50S ribosomal subunit. Forms a cluster with proteins L14 and L19. In terms of processing, methylated by PrmB.

In terms of biological role, one of the primary rRNA binding proteins, it binds directly near the 3'-end of the 23S rRNA, where it nucleates assembly of the 50S subunit. The chain is Large ribosomal subunit protein uL3 from Alkalilimnicola ehrlichii (strain ATCC BAA-1101 / DSM 17681 / MLHE-1).